A 275-amino-acid polypeptide reads, in one-letter code: Bis(5'-nucleosyl)-tetraphosphatase, symmetrical (275 aa).

Belongs to the Ap4A hydrolase family.

It carries out the reaction P(1),P(4)-bis(5'-adenosyl) tetraphosphate + H2O = 2 ADP + 2 H(+). Its function is as follows. Hydrolyzes diadenosine 5',5'''-P1,P4-tetraphosphate to yield ADP. The protein is Bis(5'-nucleosyl)-tetraphosphatase, symmetrical of Haemophilus influenzae (strain PittEE).